We begin with the raw amino-acid sequence, 360 residues long: UDP-arabinopyranose mutase 2 (360 aa).

An N-acetylvaline modification is found at Val-2. The DXD motif signature appears at 110 to 112; sequence DDD. N-linked (Glc...) arginine glycosylation is present at Arg-158.

Belongs to the RGP family. Heteromers with RGP1, RGP4 and RGP5. It depends on Mn(2+) as a cofactor. Mg(2+) is required as a cofactor. Reversibly glycosylated in vitro by UDP-glucose, UDP-xylose and UDP-galactose, but not UDP-mannose. Predominantly expressed in shoot and root apical meristems. Expressed in epidermal cells of leaves, inflorescence stems and seed coat. Expressed in pollen.

The protein resides in the cytoplasm. The protein localises to the cytosol. Its subcellular location is the golgi apparatus. It carries out the reaction UDP-beta-L-arabinofuranose = UDP-beta-L-arabinopyranose. Its function is as follows. UDP-L-arabinose mutase involved in the biosynthesis of cell wall non-cellulosic polysaccharides. Catalyzes the interconvertion of UDP-L-arabinopyranose (UDP-Arap) and UDP-L-arabinofuranose (UDP-Araf) in vitro. Preferentially catalyzes the formation of UDP-Arap from UDP-Araf. At thermodynamic equilibrium in vitro the ratio of the pyranose form over the furanose form is 95:5. Is not active on other UDP-sugars (UDP-Gal, UDP-Xyl, UDP-Glc, GDP-Man and GDP-Fuc). Functions redundantly with RGP2 and is essential for proper cell walls and pollen development. Probably involved in the formation of the pectocellulosic cell wall layer intine. Is probably active as heteromer in vivo. The polypeptide is UDP-arabinopyranose mutase 2 (Arabidopsis thaliana (Mouse-ear cress)).